Consider the following 407-residue polypeptide: RING-H2 finger protein ATL43 (407 aa).

The first 22 residues, 1 to 22 (MSSSSLILLFSTLSLFLNVSLA), serve as a signal peptide directing secretion. The chain crosses the membrane as a helical span at residues 57-77 (GIAVVIAVLTAFFSLTFLLLL). The RING-type; atypical zinc-finger motif lies at 146–188 (CAVCLARFEPTEVLRLLPKCKHAFHVECVDTWLDAHSTCPLCR).

Belongs to the RING-type zinc finger family. ATL subfamily.

The protein localises to the membrane. The enzyme catalyses S-ubiquitinyl-[E2 ubiquitin-conjugating enzyme]-L-cysteine + [acceptor protein]-L-lysine = [E2 ubiquitin-conjugating enzyme]-L-cysteine + N(6)-ubiquitinyl-[acceptor protein]-L-lysine.. It functions in the pathway protein modification; protein ubiquitination. In Arabidopsis thaliana (Mouse-ear cress), this protein is RING-H2 finger protein ATL43 (ATL43).